Consider the following 501-residue polypeptide: MTDTQNKNYIIALDQGTTSSRAIIFDRDANVVSTAQSEFVQHYPQAGWVEHDPMEIFATQTACMTKALAQADLHHDQIAAIGITNQRETTVIWERDTGRPIYNAIVWQCRRSTEICQQLKRDGLEEYIKDTTGLVLDPYFSGSKVKWILDHVEGSRERARKGELMFGTIDTWLIWKFTGGKVHVTDYTNASRTMLFNIHTLEWDQRMLDVLDIPREILPEVKSSSEVYGHSKSGIPIAGIAGDQQAALFGQMCVEPGQAKNTYGTGCFLLMNTGKKAVKSAHGMLTTIGCGPRGEVAYALEGAVFNGGSTVQWLRDELKLINDALDTEYFAGKVKDSNGVYLVPAFTGLGAPYWDPYARGALFGLTRGVKVDHIIRAALESIAYQTRDVLDAMQQDSGERLKSLRVDGGAVANNFLMQFQADILGTHVERPQMRETTALGAAFLAGLAIGFWSSLDELRNKAVIERVFEPACEEAHREKLYAGWQKAVARTRDWEPHENEE.

Thr17 contributes to the ADP binding site. The ATP site is built by Thr17, Thr18, and Ser19. Position 17 (Thr17) interacts with sn-glycerol 3-phosphate. Arg21 lines the ADP pocket. Residues Arg87, Glu88, Tyr139, and Asp243 each contribute to the sn-glycerol 3-phosphate site. Glycerol-binding residues include Arg87, Glu88, Tyr139, Asp243, and Gln244. Positions 265 and 308 each coordinate ADP. The ATP site is built by Thr265, Gly308, Gln312, and Gly409. ADP is bound by residues Gly409 and Asn413.

It belongs to the FGGY kinase family.

It carries out the reaction glycerol + ATP = sn-glycerol 3-phosphate + ADP + H(+). It participates in polyol metabolism; glycerol degradation via glycerol kinase pathway; sn-glycerol 3-phosphate from glycerol: step 1/1. Inhibited by fructose 1,6-bisphosphate (FBP). Functionally, key enzyme in the regulation of glycerol uptake and metabolism. Catalyzes the phosphorylation of glycerol to yield sn-glycerol 3-phosphate. The sequence is that of Glycerol kinase from Pseudomonas syringae pv. tomato (strain ATCC BAA-871 / DC3000).